Here is a 120-residue protein sequence, read N- to C-terminus: Small ribosomal subunit protein uS13 (120 aa).

Residues 93 to 120 are disordered; it reads RKGLPVRGQTTKNNARTRKGKKKTVGSK. The segment covering 107–120 has biased composition (basic residues); the sequence is ARTRKGKKKTVGSK.

This sequence belongs to the universal ribosomal protein uS13 family. As to quaternary structure, part of the 30S ribosomal subunit. Forms a loose heterodimer with protein S19. Forms two bridges to the 50S subunit in the 70S ribosome.

In terms of biological role, located at the top of the head of the 30S subunit, it contacts several helices of the 16S rRNA. In the 70S ribosome it contacts the 23S rRNA (bridge B1a) and protein L5 of the 50S subunit (bridge B1b), connecting the 2 subunits; these bridges are implicated in subunit movement. Contacts the tRNAs in the A and P-sites. The sequence is that of Small ribosomal subunit protein uS13 from Helicobacter acinonychis (strain Sheeba).